We begin with the raw amino-acid sequence, 473 residues long: Endoglucanase B (473 aa).

The N-terminal stretch at 1 to 17 is a signal peptide; it reads MKFLNTFSLLSLAIIGS. Residues 18 to 367 are catalytic; the sequence is KAMKNISSKE…GLIKGLGNSI (350 aa). Residue glutamate 173 is the Proton donor of the active site. Residue glutamate 295 is the Nucleophile of the active site. A linker region spans residues 365–387; it reads NSIKTRTTIRRTTTTTTSQSQPT. 2 consecutive CBM10 domains span residues 391-427 and 436-473; these read SCFS…CGIK and ICWS…CGIY.

This sequence belongs to the glycosyl hydrolase 5 (cellulase A) family.

The enzyme catalyses Endohydrolysis of (1-&gt;4)-beta-D-glucosidic linkages in cellulose, lichenin and cereal beta-D-glucans.. In terms of biological role, rate of hydrolysis of cellulo-oligosaccharides increased with increasing chain length from cellotriose to cellopentaose. In Neocallimastix patriciarum (Rumen fungus), this protein is Endoglucanase B (CELB).